We begin with the raw amino-acid sequence, 244 residues long: Adiponectin (244 aa).

The first 18 residues, 1-18 (MLLLGAVLLLLALPGHDQ), serve as a signal peptide directing secretion. O-linked (GalNAc...) threonine glycans are attached at residues Thr21 and Thr22. Lys33 is modified (5-hydroxylysine). An S-(2-succinyl)cysteine modification is found at Cys36. The interval 40–101 (MAGIPGHPGH…RGFPGIQGRK (62 aa)) is disordered. Residues 42-107 (GIPGHPGHNG…QGRKGEPGEG (66 aa)) enclose the Collagen-like domain. Pro44, Pro47, and Pro53 each carry 4-hydroxyproline. The span at 55-70 (RDGRDGTPGEKGEKGD) shows a compositional bias: basic and acidic residues. Lys65 and Lys68 each carry 5-hydroxylysine. Lys65 and Lys68 each carry an O-linked (Gal...) hydroxylysine; partial glycan. Pro71 and Pro76 each carry 4-hydroxyproline; partial. Lys77 carries the 5-hydroxylysine modification. An O-linked (Gal...) hydroxylysine; partial glycan is attached at Lys77. Position 91 is a 4-hydroxyproline (Pro91). A 4-hydroxyproline; partial modification is found at Pro95. Lys101 is subject to 5-hydroxylysine. O-linked (Gal...) hydroxylysine; partial glycosylation occurs at Lys101. Residues 108-244 (AYVYRSAFSV…TGFLLYHDTN (137 aa)) form the C1q domain.

Homomultimer. Forms trimers, hexamers and 12- to 18-mers. The trimers (low molecular weight complexes / LMW) are assembled via non-covalent interactions of the collagen-like domains in a triple helix and hydrophobic interactions within the globular C1q domain. Several trimers can associate to form disulfide-linked hexamers (middle molecular weight complexes / MMW) and larger complexes (higher molecular weight / HMW). The HMW-complex assembly is also modulated by the degree of lysine hydroxylation and glycosylation. LMW, MMW and HMW complexes bind to HBEGF, MMW and HMW complexes bind to PDGFB, and HMW complex binds to FGF2. Interacts with CTRP9 via the C1q domain (heterotrimeric complex). HMW complexes are more extensively glycosylated than smaller oligomers. Hydroxylation and glycosylation of the lysine residues within the collagen-like domain of adiponectin seem to be critically involved in regulating the formation and/or secretion of HMW complexes and consequently contribute to the insulin-sensitizing activity of adiponectin in hepatocytes. In terms of processing, O-glycosylated. Not N-glycosylated. O-linked glycans on hydroxylysines consist of Glc-Gal disaccharides bound to the oxygen atom of post-translationally added hydroxyl groups. Sialylated to varying degrees depending on tissue. Thr-22 appears to be the major site of sialylation. Higher sialylation found in SGBS adipocytes than in HEK fibroblasts. Sialylation is not required neither for heterodimerization nor for secretion. Not sialylated on the glycosylated hydroxylysines. Desialylated forms are rapidly cleared from the circulation. Post-translationally, succination of Cys-36 by the Krebs cycle intermediate fumarate, which leads to S-(2-succinyl)cysteine residues, inhibits polymerization and secretion of adiponectin. Adiponectin is a major target for succination in both adipocytes and adipose tissue of diabetic mammals. It was proposed that succination of proteins is a biomarker of mitochondrial stress and accumulation of Krebs cycle intermediates in adipose tissue in diabetes and that succination of adiponectin may contribute to the decrease in plasma adiponectin in diabetes. As to expression, synthesized exclusively by adipocytes and secreted into plasma.

The protein resides in the secreted. Polymerization and secretion of adiponectin is inhibited by succination of cysteine residues by the Krebs cycle intermediate fumarate, which leads to S-(2-succinyl)cysteine residues. Functionally, important adipokine involved in the control of fat metabolism and insulin sensitivity, with direct anti-diabetic, anti-atherogenic and anti-inflammatory activities. Stimulates AMPK phosphorylation and activation in the liver and the skeletal muscle, enhancing glucose utilization and fatty-acid combustion. Antagonizes TNF-alpha by negatively regulating its expression in various tissues such as liver and macrophages, and also by counteracting its effects. Inhibits endothelial NF-kappa-B signaling through a cAMP-dependent pathway. May play a role in cell growth, angiogenesis and tissue remodeling by binding and sequestering various growth factors with distinct binding affinities, depending on the type of complex, LMW, MMW or HMW. This is Adiponectin (ADIPOQ) from Homo sapiens (Human).